The chain runs to 300 residues: Transcriptional dual regulator GltC (300 aa).

The 58-residue stretch at 1–58 (MELRQLRYFMEVAEREHVSEAADHLHVAQSAISRQIANLEEELNVTLFEREGRNIKLT) folds into the HTH lysR-type domain. The H-T-H motif DNA-binding region spans 18–37 (VSEAADHLHVAQSAISRQIA).

Belongs to the LysR transcriptional regulatory family. Interacts with gutamate dehydrogenase RocG.

Activated by alpha-ketoglutarate and inhibited by glutamate and by RocG. Positive regulator of glutamate biosynthesis (gltAB genes). Negatively regulates its own expression. In Bacillus subtilis (strain 168), this protein is Transcriptional dual regulator GltC (gltC).